We begin with the raw amino-acid sequence, 485 residues long: Aspartyl/glutamyl-tRNA(Asn/Gln) amidotransferase subunit B (485 aa).

It belongs to the GatB/GatE family. GatB subfamily. As to quaternary structure, heterotrimer of A, B and C subunits.

It catalyses the reaction L-glutamyl-tRNA(Gln) + L-glutamine + ATP + H2O = L-glutaminyl-tRNA(Gln) + L-glutamate + ADP + phosphate + H(+). The enzyme catalyses L-aspartyl-tRNA(Asn) + L-glutamine + ATP + H2O = L-asparaginyl-tRNA(Asn) + L-glutamate + ADP + phosphate + 2 H(+). Allows the formation of correctly charged Asn-tRNA(Asn) or Gln-tRNA(Gln) through the transamidation of misacylated Asp-tRNA(Asn) or Glu-tRNA(Gln) in organisms which lack either or both of asparaginyl-tRNA or glutaminyl-tRNA synthetases. The reaction takes place in the presence of glutamine and ATP through an activated phospho-Asp-tRNA(Asn) or phospho-Glu-tRNA(Gln). The sequence is that of Aspartyl/glutamyl-tRNA(Asn/Gln) amidotransferase subunit B from Borreliella afzelii (strain PKo) (Borrelia afzelii).